Consider the following 340-residue polypeptide: MTVQMEYEKDVKVAALDGKKIAVIGYGSQGHAHAQNLRDSGRDVIIGVRPGKSFDKAKEDGFDTYTVTEATKLADVIMILAPDEIQQELYEAEIAPNLEAGNAVGFAHGFNIHFEFIKVPADVDVFMCAPKGPGHLVRRTYEEGFGVPALYAVYQDATGNAKNIAMDWCKGVGAARVGLLETTYKEETEEDLFGEQAVLCGGLTALIEAGFEVLTEAGYAPELAYFEVLHEMKLIVDLIYEGGFKKMRQSISNTAEYGDYVSGPRVITEQVKENMKAVLADIQNGKFANDFVNDYKAGRPKLTAYREQAANLEIEKVGAELRKAMPFVGKNDDDAFKIYN.

Positions 3 to 182 (VQMEYEKDVK…GAARVGLLET (180 aa)) constitute a KARI N-terminal Rossmann domain. Residues 26 to 29 (YGSQ), Arg-49, Ser-53, and 83 to 86 (DEIQ) contribute to the NADP(+) site. His-108 is an active-site residue. Gly-134 serves as a coordination point for NADP(+). The KARI C-terminal knotted domain occupies 183 to 328 (TYKEETEEDL…AELRKAMPFV (146 aa)). Residues Asp-191, Glu-195, Glu-227, and Glu-231 each coordinate Mg(2+). Residue Ser-252 coordinates substrate.

Belongs to the ketol-acid reductoisomerase family. The cofactor is Mg(2+).

It carries out the reaction (2R)-2,3-dihydroxy-3-methylbutanoate + NADP(+) = (2S)-2-acetolactate + NADPH + H(+). It catalyses the reaction (2R,3R)-2,3-dihydroxy-3-methylpentanoate + NADP(+) = (S)-2-ethyl-2-hydroxy-3-oxobutanoate + NADPH + H(+). It participates in amino-acid biosynthesis; L-isoleucine biosynthesis; L-isoleucine from 2-oxobutanoate: step 2/4. It functions in the pathway amino-acid biosynthesis; L-valine biosynthesis; L-valine from pyruvate: step 2/4. Functionally, involved in the biosynthesis of branched-chain amino acids (BCAA). Catalyzes an alkyl-migration followed by a ketol-acid reduction of (S)-2-acetolactate (S2AL) to yield (R)-2,3-dihydroxy-isovalerate. In the isomerase reaction, S2AL is rearranged via a Mg-dependent methyl migration to produce 3-hydroxy-3-methyl-2-ketobutyrate (HMKB). In the reductase reaction, this 2-ketoacid undergoes a metal-dependent reduction by NADPH to yield (R)-2,3-dihydroxy-isovalerate. This Streptococcus pneumoniae (strain CGSP14) protein is Ketol-acid reductoisomerase (NADP(+)).